The chain runs to 396 residues: Protein btn1 (396 aa).

8 consecutive transmembrane segments (helical) span residues 15–35, 45–65, 76–96, 138–158, 161–181, 234–254, 296–316, and 321–341; these read CFLI…SAAL, GVVL…ASIL, IGFC…SSSV, LAGL…NFSV, TLII…FVLP, FLVY…LLFP, LAIT…LYLT, and FVLF…VNVY.

The protein belongs to the battenin family.

It is found in the endoplasmic reticulum membrane. The protein resides in the vacuole membrane. Its function is as follows. Involved in vacuolar transport and vacuole pH homeostasis. Also required for cytokinesis. In Schizosaccharomyces pombe (strain 972 / ATCC 24843) (Fission yeast), this protein is Protein btn1.